The sequence spans 311 residues: HPr kinase/phosphorylase (311 aa).

Catalysis depends on residues His-138 and Lys-159. Gly-153 to Ser-160 contributes to the ATP binding site. Ser-160 serves as a coordination point for Mg(2+). Asp-177 acts as the Proton acceptor; for phosphorylation activity. Proton donor; for dephosphorylation activity in catalysis. Residues Leu-201–Asn-210 are important for the catalytic mechanism of both phosphorylation and dephosphorylation. Glu-202 provides a ligand contact to Mg(2+). Arg-243 is a catalytic residue. The segment at Pro-264 to Arg-269 is important for the catalytic mechanism of dephosphorylation.

The protein belongs to the HPrK/P family. In terms of assembly, homohexamer. Requires Mg(2+) as cofactor.

It catalyses the reaction [HPr protein]-L-serine + ATP = [HPr protein]-O-phospho-L-serine + ADP + H(+). The enzyme catalyses [HPr protein]-O-phospho-L-serine + phosphate + H(+) = [HPr protein]-L-serine + diphosphate. Functionally, catalyzes the ATP- as well as the pyrophosphate-dependent phosphorylation of a specific serine residue in HPr, a phosphocarrier protein of the phosphoenolpyruvate-dependent sugar phosphotransferase system (PTS). HprK/P also catalyzes the pyrophosphate-producing, inorganic phosphate-dependent dephosphorylation (phosphorolysis) of seryl-phosphorylated HPr (P-Ser-HPr). The two antagonistic activities of HprK/P are regulated by several intracellular metabolites, which change their concentration in response to the absence or presence of rapidly metabolisable carbon sources (glucose, fructose, etc.) in the growth medium. Also phosphorylates/dephosphorylates the HPr-like catabolite repression protein crh on a specific serine residue. Therefore, by controlling the phosphorylation state of HPr and crh, HPrK/P is a sensor enzyme that plays a major role in the regulation of carbon metabolism and sugar transport: it mediates carbon catabolite repression (CCR), and regulates PTS-catalyzed carbohydrate uptake and inducer exclusion. This Geobacillus kaustophilus (strain HTA426) protein is HPr kinase/phosphorylase.